The sequence spans 283 residues: SNAP25 homologous protein SNAP32 (283 aa).

Disordered stretches follow at residues 1–64 (MSGR…AAAR) and 192–212 (LGLS…EPTS). The segment covering 198 to 212 (PPQSNARQFHSEPTS) has biased composition (polar residues). Residues 218 to 280 (EMEKAKQDDG…KGANTRARRL (63 aa)) form the t-SNARE coiled-coil homology domain.

The protein belongs to the SNAP-25 family. As to quaternary structure, interacts with SYP121. In terms of tissue distribution, expressed in roots, culms and leaves.

It localises to the membrane. In terms of biological role, t-SNARE involved in diverse vesicle trafficking and membrane fusion processes. May be involved in resistance to the rice blast fungus Magnaporthe oryzae. May contribute to host resistance to rice blast through interaction with SYP121. The chain is SNAP25 homologous protein SNAP32 from Oryza sativa subsp. japonica (Rice).